A 438-amino-acid chain; its full sequence is Serine hydroxymethyltransferase (438 aa).

(6S)-5,6,7,8-tetrahydrofolate contacts are provided by residues leucine 133 and 137–139 (GHL). Lysine 242 carries the N6-(pyridoxal phosphate)lysine modification.

Belongs to the SHMT family. As to quaternary structure, homodimer. Pyridoxal 5'-phosphate serves as cofactor.

It localises to the cytoplasm. It carries out the reaction (6R)-5,10-methylene-5,6,7,8-tetrahydrofolate + glycine + H2O = (6S)-5,6,7,8-tetrahydrofolate + L-serine. It functions in the pathway one-carbon metabolism; tetrahydrofolate interconversion. The protein operates within amino-acid biosynthesis; glycine biosynthesis; glycine from L-serine: step 1/1. Its function is as follows. Catalyzes the reversible interconversion of serine and glycine with tetrahydrofolate (THF) serving as the one-carbon carrier. This reaction serves as the major source of one-carbon groups required for the biosynthesis of purines, thymidylate, methionine, and other important biomolecules. Also exhibits THF-independent aldolase activity toward beta-hydroxyamino acids, producing glycine and aldehydes, via a retro-aldol mechanism. This is Serine hydroxymethyltransferase from Brucella ovis (strain ATCC 25840 / 63/290 / NCTC 10512).